A 430-amino-acid polypeptide reads, in one-letter code: 3-phosphoshikimate 1-carboxyvinyltransferase (430 aa).

The disordered stretch occupies residues 1-20; that stretch reads MHATVSPSRVRGRARAPPSK. Residues Lys-20, Ser-21, and Arg-25 each coordinate 3-phosphoshikimate. Residue Lys-20 coordinates phosphoenolpyruvate. 2 residues coordinate phosphoenolpyruvate: Gly-91 and Arg-119. Ser-164, Ser-165, Gln-166, Ser-192, Asp-312, and Lys-339 together coordinate 3-phosphoshikimate. Residue Gln-166 coordinates phosphoenolpyruvate. Asp-312 functions as the Proton acceptor in the catalytic mechanism. Positions 343 and 386 each coordinate phosphoenolpyruvate.

The protein belongs to the EPSP synthase family. Monomer.

The protein resides in the cytoplasm. The catalysed reaction is 3-phosphoshikimate + phosphoenolpyruvate = 5-O-(1-carboxyvinyl)-3-phosphoshikimate + phosphate. Its pathway is metabolic intermediate biosynthesis; chorismate biosynthesis. In terms of biological role, catalyzes the transfer of the enolpyruvyl moiety of phosphoenolpyruvate (PEP) to the 5-hydroxyl of shikimate-3-phosphate (S3P) to produce enolpyruvyl shikimate-3-phosphate and inorganic phosphate. The chain is 3-phosphoshikimate 1-carboxyvinyltransferase from Halobacterium salinarum (strain ATCC 29341 / DSM 671 / R1).